We begin with the raw amino-acid sequence, 294 residues long: rRNA 2'-O-methyltransferase fibrillarin (294 aa).

Residues 1–62 are disordered; it reads MGKDFKSGGG…GKFGAKGPRG (62 aa). Gly residues predominate over residues 20–56; the sequence is GPGGPGGRPFNKGPGGPGGPGGKFGGGRPGGPGGKFG. Asymmetric dimethylarginine occurs at positions 27, 47, and 61. S-adenosyl-L-methionine contacts are provided by residues 151–152, 170–171, 195–196, and 215–218; these read TT, EF, DA, and DVAQ.

Belongs to the methyltransferase superfamily. Fibrillarin family. As to quaternary structure, component of box C/D small nucleolar ribonucleoprotein (snoRNP) particles. It is associated with the U3, U8 and U13 small nuclear RNAs. By homology to other fibrillarins, some or all of the N-terminal domain arginines are modified to asymmetric dimethylarginine (DMA).

The protein localises to the nucleus. Its subcellular location is the nucleolus. It catalyses the reaction L-glutaminyl-[histone H2A] + S-adenosyl-L-methionine = N(5)-methyl-L-glutaminyl-[histone H2A] + S-adenosyl-L-homocysteine + H(+). Its function is as follows. S-adenosyl-L-methionine-dependent methyltransferase that has the ability to methylate both RNAs and proteins. Involved in pre-rRNA processing. Utilizes the methyl donor S-adenosyl-L-methionine to catalyze the site-specific 2'-hydroxyl methylation of ribose moieties in pre-ribosomal RNA. Site specificity is provided by a guide RNA that base pairs with the substrate. Methylation occurs at a characteristic distance from the sequence involved in base pairing with the guide RNA. Also acts as a protein methyltransferase by mediating methylation of 'Gln-105' of histone H2A (H2AQ105me), a modification that impairs binding of the FACT complex and is specifically present at 35S ribosomal DNA locus. The sequence is that of rRNA 2'-O-methyltransferase fibrillarin (FIB) from Tetrahymena thermophila.